The primary structure comprises 128 residues: 14.7 kDa protein (128 aa).

Residues 65–94 (CFDCGAYLYDDHVCKRFTSRSNSDCLSVIH) form a C4-type zinc finger.

In terms of biological role, may act as a regulatory factor during viral transcription. In Shallot virus X (ShVX), this protein is 14.7 kDa protein.